A 41-amino-acid chain; its full sequence is Histone H2B.3, sperm (41 aa).

Residues 1–41 (MPRSPSKSSPKKGSPRKASPKRGGKGAKRAGKGGRRRTVVK) are disordered. 4 consecutive short sequence motifs (SPKK motif) follow at residues 4–7 (SPSK), 9–12 (SPKK), 14–17 (SPRK), and 19–22 (SPKR). The span at 9 to 41 (SPKKGSPRKASPKRGGKGAKRAGKGGRRRTVVK) shows a compositional bias: basic residues. A phosphoserine mark is found at Ser14 and Ser19.

The protein belongs to the histone H2B family. As to quaternary structure, the nucleosome is a histone octamer containing two molecules each of H2A, H2B, H3 and H4 assembled in one H3-H4 heterotetramer and two H2A-H2B heterodimers. The octamer wraps approximately 147 bp of DNA. Monoubiquitination gives a specific tag for epigenetic transcriptional activation and is also prerequisite for histone H3 'Lys-4' and 'Lys-79' methylation. Post-translationally, phosphorylated on SPKK motifs 3 and 4; which may regulate DNA binding. Dephosphorylated during maturation of spermatids to mature sperm and rephosphorylated at fertilization.

The protein resides in the nucleus. Its subcellular location is the chromosome. In terms of biological role, core component of nucleosome. Nucleosomes wrap and compact DNA into chromatin, limiting DNA accessibility to the cellular machineries which require DNA as a template. Histones thereby play a central role in transcription regulation, DNA repair, DNA replication and chromosomal stability. DNA accessibility is regulated via a complex set of post-translational modifications of histones, also called histone code, and nucleosome remodeling. The protein is Histone H2B.3, sperm of Echinus esculentus (Sea urchin).